A 258-amino-acid chain; its full sequence is Short-chain dehydrogenase reductase 3c (258 aa).

Ile-12–Val-36 contributes to the NAD(+) binding site. Ser-144 serves as a coordination point for substrate. Tyr-156 functions as the Proton acceptor in the catalytic mechanism.

This sequence belongs to the short-chain dehydrogenases/reductases (SDR) family.

This chain is Short-chain dehydrogenase reductase 3c (SDR3c), found in Arabidopsis thaliana (Mouse-ear cress).